We begin with the raw amino-acid sequence, 378 residues long: Flap endonuclease 1 (378 aa).

The segment at 1 to 105 is N-domain; the sequence is MGIKGLNSII…HELDKRTERR (105 aa). Residue aspartate 34 coordinates Mg(2+). DNA-binding residues include arginine 47 and arginine 71. Residues aspartate 87, glutamate 156, glutamate 158, aspartate 177, and aspartate 179 each coordinate Mg(2+). The I-domain stretch occupies residues 120–251; that stretch reads EIMKHERRLV…VTALKLIKEH (132 aa). DNA is bound at residue glutamate 156. The DNA site is built by glycine 229 and aspartate 231. Aspartate 231 contributes to the Mg(2+) binding site. Residues 337–345 are interaction with PCNA; the sequence is VQGRLDSFF. The span at 356–367 shows a compositional bias: low complexity; sequence AASARKAQAAKK. The interval 356–378 is disordered; the sequence is AASARKAQAAKKTNQKGKVLKRR. Basic residues predominate over residues 368–378; the sequence is TNQKGKVLKRR.

It belongs to the XPG/RAD2 endonuclease family. FEN1 subfamily. As to quaternary structure, interacts with PCNA. Three molecules of FEN1 bind to one PCNA trimer with each molecule binding to one PCNA monomer. PCNA stimulates the nuclease activity without altering cleavage specificity. Requires Mg(2+) as cofactor. Post-translationally, phosphorylated. Phosphorylation upon DNA damage induces relocalization to the nuclear plasma.

It is found in the nucleus. The protein resides in the nucleolus. Its subcellular location is the nucleoplasm. It localises to the mitochondrion. Structure-specific nuclease with 5'-flap endonuclease and 5'-3' exonuclease activities involved in DNA replication and repair. During DNA replication, cleaves the 5'-overhanging flap structure that is generated by displacement synthesis when DNA polymerase encounters the 5'-end of a downstream Okazaki fragment. It enters the flap from the 5'-end and then tracks to cleave the flap base, leaving a nick for ligation. Also involved in the long patch base excision repair (LP-BER) pathway, by cleaving within the apurinic/apyrimidinic (AP) site-terminated flap. Acts as a genome stabilization factor that prevents flaps from equilibrating into structures that lead to duplications and deletions. Also possesses 5'-3' exonuclease activity on nicked or gapped double-stranded DNA, and exhibits RNase H activity. Also involved in replication and repair of rDNA and in repairing mitochondrial DNA. In Eremothecium gossypii (strain ATCC 10895 / CBS 109.51 / FGSC 9923 / NRRL Y-1056) (Yeast), this protein is Flap endonuclease 1.